Reading from the N-terminus, the 603-residue chain is Elongation factor 4 (603 aa).

One can recognise a tr-type G domain in the interval 2 to 184 (NHIRNFSIIA…AVVALIPAPK (183 aa)). GTP-binding positions include 14 to 19 (DHGKST) and 131 to 134 (NKMD).

Belongs to the TRAFAC class translation factor GTPase superfamily. Classic translation factor GTPase family. LepA subfamily.

The protein resides in the cell inner membrane. It carries out the reaction GTP + H2O = GDP + phosphate + H(+). In terms of biological role, required for accurate and efficient protein synthesis under certain stress conditions. May act as a fidelity factor of the translation reaction, by catalyzing a one-codon backward translocation of tRNAs on improperly translocated ribosomes. Back-translocation proceeds from a post-translocation (POST) complex to a pre-translocation (PRE) complex, thus giving elongation factor G a second chance to translocate the tRNAs correctly. Binds to ribosomes in a GTP-dependent manner. This Polaromonas naphthalenivorans (strain CJ2) protein is Elongation factor 4.